The sequence spans 145 residues: Cell division protein SepF (145 aa).

This sequence belongs to the SepF family. As to quaternary structure, homodimer. Interacts with FtsZ.

It is found in the cytoplasm. Its function is as follows. Cell division protein that is part of the divisome complex and is recruited early to the Z-ring. Probably stimulates Z-ring formation, perhaps through the cross-linking of FtsZ protofilaments. Its function overlaps with FtsA. This Lactobacillus helveticus (strain DPC 4571) protein is Cell division protein SepF.